A 213-amino-acid polypeptide reads, in one-letter code: Orotate phosphoribosyltransferase (213 aa).

Position 26 (lysine 26) interacts with 5-phospho-alpha-D-ribose 1-diphosphate. 34–35 (FF) is a binding site for orotate. 5-phospho-alpha-D-ribose 1-diphosphate contacts are provided by residues 72 to 73 (YK), arginine 99, lysine 100, lysine 103, histidine 105, and 124 to 132 (DDVITAGTA). Orotate-binding residues include threonine 128 and arginine 156.

This sequence belongs to the purine/pyrimidine phosphoribosyltransferase family. PyrE subfamily. In terms of assembly, homodimer. It depends on Mg(2+) as a cofactor.

The catalysed reaction is orotidine 5'-phosphate + diphosphate = orotate + 5-phospho-alpha-D-ribose 1-diphosphate. Its pathway is pyrimidine metabolism; UMP biosynthesis via de novo pathway; UMP from orotate: step 1/2. Catalyzes the transfer of a ribosyl phosphate group from 5-phosphoribose 1-diphosphate to orotate, leading to the formation of orotidine monophosphate (OMP). The protein is Orotate phosphoribosyltransferase of Salmonella typhi.